Reading from the N-terminus, the 212-residue chain is MTTQKIVHTKSPDGSKLFRHQAKFVAGAMNINQIPNFSLPEIAFVGKSNVGKSSLINTICNNKNLAKVSNTPGRTRQINFFNLADKLIIVDLPGYGFANVPISVKEQWEVLISYYLRNSYSLRLVNLLIDSRRGIKENDKKVAELLLANKREFQIIFTKSDKVTDRKNLNDEAQNFLATLNYSCNVMYVSSRSKEGARELKASLAKCIKPQR.

Residues 38–210 (SLPEIAFVGK…KASLAKCIKP (173 aa)) form the EngB-type G domain. GTP contacts are provided by residues 46 to 53 (GKSNVGKS), 73 to 77 (GRTRQ), 91 to 94 (DLPG), 158 to 161 (TKSD), and 189 to 191 (VSS). Mg(2+)-binding residues include S53 and T75.

The protein belongs to the TRAFAC class TrmE-Era-EngA-EngB-Septin-like GTPase superfamily. EngB GTPase family. It depends on Mg(2+) as a cofactor.

Its function is as follows. Necessary for normal cell division and for the maintenance of normal septation. In Rickettsia felis (strain ATCC VR-1525 / URRWXCal2) (Rickettsia azadi), this protein is Probable GTP-binding protein EngB.